The chain runs to 101 residues: Protein RALF-like 14 (101 aa).

The signal sequence occupies residues 1–21 (MKLLIFAVIISVVLFPVLVSS). Residues 22–56 (RTIKCDQLSGKCINGEEKEIMNMRLGLDVSSRRIL) constitute a propeptide, removed in mature form. C90 and C96 are disulfide-bonded.

It belongs to the plant rapid alkalinization factor (RALF) family. Proteolytically cleaved, probably by S1P, a subtilisin-like serine protease (subtilase).

It is found in the secreted. Functionally, cell signaling peptide that may regulate plant stress, growth, and development. Mediates a rapid alkalinization of extracellular space by mediating a transient increase in the cytoplasmic Ca(2+) concentration leading to a calcium-dependent signaling events through a cell surface receptor and a concomitant activation of some intracellular mitogen-activated protein kinases. This is Protein RALF-like 14 (RALFL14) from Arabidopsis thaliana (Mouse-ear cress).